A 181-amino-acid polypeptide reads, in one-letter code: Photosystem I assembly protein Ycf4 (181 aa).

Helical transmembrane passes span Tyr-19 to Ser-39 and Val-62 to Ile-82.

The protein belongs to the Ycf4 family.

The protein localises to the plastid. The protein resides in the chloroplast thylakoid membrane. Its function is as follows. Seems to be required for the assembly of the photosystem I complex. The sequence is that of Photosystem I assembly protein Ycf4 from Phaeodactylum tricornutum (strain CCAP 1055/1).